The primary structure comprises 501 residues: UDP-N-acetylmuramoyl-L-alanyl-D-glutamate--2,6-diaminopimelate ligase (501 aa).

UDP-N-acetyl-alpha-D-muramoyl-L-alanyl-D-glutamate contacts are provided by residues Leu-26, Ser-28, and 43–45 (HQC). An ATP-binding site is contributed by 123 to 129 (GTNGKTT). Residues Asn-164, 165-166 (TT), Ser-192, Gln-198, and Arg-200 each bind UDP-N-acetyl-alpha-D-muramoyl-L-alanyl-D-glutamate. Lys-232 is subject to N6-carboxylysine. Meso-2,6-diaminopimelate is bound by residues Arg-398, 422-425 (DNPR), Gly-473, and Glu-477. The Meso-diaminopimelate recognition motif signature appears at 422–425 (DNPR).

It belongs to the MurCDEF family. MurE subfamily. The cofactor is Mg(2+). Post-translationally, carboxylation is probably crucial for Mg(2+) binding and, consequently, for the gamma-phosphate positioning of ATP.

The protein localises to the cytoplasm. The enzyme catalyses UDP-N-acetyl-alpha-D-muramoyl-L-alanyl-D-glutamate + meso-2,6-diaminopimelate + ATP = UDP-N-acetyl-alpha-D-muramoyl-L-alanyl-gamma-D-glutamyl-meso-2,6-diaminopimelate + ADP + phosphate + H(+). It participates in cell wall biogenesis; peptidoglycan biosynthesis. Catalyzes the addition of meso-diaminopimelic acid to the nucleotide precursor UDP-N-acetylmuramoyl-L-alanyl-D-glutamate (UMAG) in the biosynthesis of bacterial cell-wall peptidoglycan. The polypeptide is UDP-N-acetylmuramoyl-L-alanyl-D-glutamate--2,6-diaminopimelate ligase (Haemophilus ducreyi (strain 35000HP / ATCC 700724)).